The chain runs to 562 residues: NAD-dependent malic enzyme (562 aa).

Y101 (proton donor) is an active-site residue. Residue R154 participates in NAD(+) binding. Catalysis depends on K172, which acts as the Proton acceptor. Positions 243, 244, and 267 each coordinate a divalent metal cation. Positions 267 and 415 each coordinate NAD(+).

This sequence belongs to the malic enzymes family. In terms of assembly, homotetramer. It depends on Mg(2+) as a cofactor. Mn(2+) serves as cofactor.

The catalysed reaction is (S)-malate + NAD(+) = pyruvate + CO2 + NADH. It carries out the reaction oxaloacetate + H(+) = pyruvate + CO2. The chain is NAD-dependent malic enzyme from Shewanella sp. (strain ANA-3).